Consider the following 229-residue polypeptide: Protein N-lysine methyltransferase METTL21D (229 aa).

Residue A2 is modified to N-acetylalanine. S8 bears the Phosphoserine mark. S-adenosyl-L-methionine-binding positions include W43, 75-77 (GSG), D96, W126, A143, and Y148.

Belongs to the methyltransferase superfamily. METTL21 family. Interacts with ALKBH6. Interacts with ASPSCR1 and UBXN6; interaction with ASPSCR1, but not with UBXN6, enhances VCP methylation.

It localises to the cytoplasm. The catalysed reaction is L-lysyl-[protein] + 3 S-adenosyl-L-methionine = N(6),N(6),N(6)-trimethyl-L-lysyl-[protein] + 3 S-adenosyl-L-homocysteine + 3 H(+). Its function is as follows. Protein N-lysine methyltransferase that specifically trimethylates 'Lys-315' of VCP/p97; this modification may decrease VCP ATPase activity. The protein is Protein N-lysine methyltransferase METTL21D (VCPKMT) of Homo sapiens (Human).